Reading from the N-terminus, the 220-residue chain is Pro-Pro endopeptidase (220 aa).

The signal sequence occupies residues 1–26 (MRPSKKLLIAIISIFLISSVPVSAHA). Residues 35–220 (KDTLSQIVVF…TYSFLQNLAK (186 aa)) enclose the ATLF-like domain. Interacts with substrate peptide regions lie at residues 101–103 (KGW) and 117–119 (GGS). Histidine 142 is a binding site for Zn(2+). Catalysis depends on glutamate 143, which acts as the Proton acceptor. 3 residues coordinate Zn(2+): histidine 146, tyrosine 178, and glutamate 185.

It belongs to the peptidase M34 family. Pro-Pro endopeptidase subfamily. As to quaternary structure, monomer. It depends on Zn(2+) as a cofactor.

It is found in the secreted. It carries out the reaction The enzyme catalyzes the hydrolytic cleavage of peptide bonds between two proline residues.. Its activity is regulated as follows. Is inhibited by the chelating agent o-phenanthroline in vitro. In terms of biological role, zinc-dependent endoprotease with a unique preference for proline residues surrounding the scissile bond. Exhibits a high preference for an asparagine at the P2 position and hydrophobic residues (Val, Ile, Leu) at the P3 position. Efficiently cleaves the LPXTG cell surface proteins CD630_28310 and CD630_32460 at multiple cleavage sites in vivo. Has a role in the regulation of C.difficile adhesion versus motility by cleaving surface adhesion proteins such as the collagen binding protein CD630_28310, and is important for efficient infection. Is also able to cleave fibronectin and fibrinogen in vitro; cleaves at the N-terminus of the beta-chain of fibrinogen. Destabilizes the fibronectin network produced by human fibroblasts. Therefore, may be important in key steps of clostridial pathogenesis by degrading extracellular matrix components associated with the gut epithelial cells. To a lesser extent, IgA1, IgA2, and human HSP 90-beta, but not HSP 90-alpha, are also substrates for the enzyme. Is not active on different collagen types, casein and gelatin. The protein is Pro-Pro endopeptidase of Clostridioides difficile (strain 630) (Peptoclostridium difficile).